A 485-amino-acid chain; its full sequence is Glutamyl-tRNA(Gln) amidotransferase subunit A (485 aa).

Active-site charge relay system residues include Lys79 and Ser154. Residue Ser178 is the Acyl-ester intermediate of the active site.

It belongs to the amidase family. GatA subfamily. In terms of assembly, heterotrimer of A, B and C subunits.

The catalysed reaction is L-glutamyl-tRNA(Gln) + L-glutamine + ATP + H2O = L-glutaminyl-tRNA(Gln) + L-glutamate + ADP + phosphate + H(+). In terms of biological role, allows the formation of correctly charged Gln-tRNA(Gln) through the transamidation of misacylated Glu-tRNA(Gln) in organisms which lack glutaminyl-tRNA synthetase. The reaction takes place in the presence of glutamine and ATP through an activated gamma-phospho-Glu-tRNA(Gln). This chain is Glutamyl-tRNA(Gln) amidotransferase subunit A, found in Clostridium botulinum (strain ATCC 19397 / Type A).